A 341-amino-acid polypeptide reads, in one-letter code: Methionine import ATP-binding protein MetN 3 (341 aa).

The ABC transporter domain occupies 2 to 241; sequence IEFQNVTKTF…PSHETTKRFI (240 aa). An ATP-binding site is contributed by 38-45; the sequence is GFSGAGKS.

The protein belongs to the ABC transporter superfamily. Methionine importer (TC 3.A.1.24) family. In terms of assembly, the complex is composed of two ATP-binding proteins (MetN), two transmembrane proteins (MetI) and a solute-binding protein (MetQ).

It is found in the cell membrane. The catalysed reaction is L-methionine(out) + ATP + H2O = L-methionine(in) + ADP + phosphate + H(+). It catalyses the reaction D-methionine(out) + ATP + H2O = D-methionine(in) + ADP + phosphate + H(+). In terms of biological role, part of the ABC transporter complex MetNIQ involved in methionine import. Responsible for energy coupling to the transport system. This chain is Methionine import ATP-binding protein MetN 3, found in Oceanobacillus iheyensis (strain DSM 14371 / CIP 107618 / JCM 11309 / KCTC 3954 / HTE831).